Here is a 737-residue protein sequence, read N- to C-terminus: 1,4-alpha-glucan branching enzyme GlgB (737 aa).

Catalysis depends on D419, which acts as the Nucleophile. E472 acts as the Proton donor in catalysis.

This sequence belongs to the glycosyl hydrolase 13 family. GlgB subfamily. Monomer.

It catalyses the reaction Transfers a segment of a (1-&gt;4)-alpha-D-glucan chain to a primary hydroxy group in a similar glucan chain.. It functions in the pathway glycan biosynthesis; glycogen biosynthesis. In terms of biological role, catalyzes the formation of the alpha-1,6-glucosidic linkages in glycogen by scission of a 1,4-alpha-linked oligosaccharide from growing alpha-1,4-glucan chains and the subsequent attachment of the oligosaccharide to the alpha-1,6 position. This chain is 1,4-alpha-glucan branching enzyme GlgB, found in Cellvibrio japonicus (strain Ueda107) (Pseudomonas fluorescens subsp. cellulosa).